Reading from the N-terminus, the 298-residue chain is NADH-cytochrome b5 reductase 2 (298 aa).

The chain crosses the membrane as a helical span at residues 15-38 (FVLPVAAAAVGLASYSFTSSSFIA). In terms of domain architecture, FAD-binding FR-type spans 49 to 153 (DEWIDLKLIS…KGPFVKWKWE (105 aa)). FAD is bound at residue 156-191 (QFKSIALIGGGTGITPLYQLIHEITKNPADKTQVSL).

The protein belongs to the flavoprotein pyridine nucleotide cytochrome reductase family. Requires FAD as cofactor.

Its subcellular location is the mitochondrion outer membrane. It carries out the reaction 2 Fe(III)-[cytochrome b5] + NADH = 2 Fe(II)-[cytochrome b5] + NAD(+) + H(+). Functionally, may mediate the reduction of outer membrane cytochrome b5. The sequence is that of NADH-cytochrome b5 reductase 2 (MCR1) from Scheffersomyces stipitis (strain ATCC 58785 / CBS 6054 / NBRC 10063 / NRRL Y-11545) (Yeast).